A 247-amino-acid polypeptide reads, in one-letter code: uncharacterized protein (247 aa).

The HTH merR-type domain maps to 11-85 (GMSIGAVLDL…LKVIRAQLDA (75 aa)). The H-T-H motif DNA-binding region spans 14-38 (IGAVLDLLRPDFPDVTISKIRFLEA).

Homodimer.

In terms of biological role, transcriptional regulator that binds to its own promoter and thus may play a role in the regulation of the cotranscribed genes Rv1827 and Rv1828. Can also bind several promoter regions of genes that are essential, including ftsZ. Binds to the imperfect everted repeat sequence CTCAA through its winged-HTH motif. This is an uncharacterized protein from Mycobacterium tuberculosis (strain ATCC 25618 / H37Rv).